We begin with the raw amino-acid sequence, 423 residues long: Putative galacturan 1,4-alpha-galacturonidase C (423 aa).

A signal peptide spans 1 to 20 (MQLRASVLLSFLGLASVGHA). Residues Asn92, Asn98, Asn118, Asn156, Asn179, and Asn191 are each glycosylated (N-linked (GlcNAc...) asparagine). 2 PbH1 repeats span residues 215-236 (ATNI…AIKP) and 238-258 (SYNI…AIGS). The active-site Proton donor is the Asp229. Residues Cys231 and Cys248 are joined by a disulfide bond. Asn245, Asn344, and Asn362 each carry an N-linked (GlcNAc...) asparagine glycan. Cys379 and Cys385 are oxidised to a cystine. N-linked (GlcNAc...) asparagine glycosylation occurs at Asn400.

It belongs to the glycosyl hydrolase 28 family.

It is found in the secreted. The catalysed reaction is [(1-&gt;4)-alpha-D-galacturonosyl](n) + H2O = alpha-D-galacturonate + [(1-&gt;4)-alpha-D-galacturonosyl](n-1). Its function is as follows. Specific in hydrolyzing the terminal glycosidic bond of polygalacturonic acid and oligogalacturonates. The protein is Putative galacturan 1,4-alpha-galacturonidase C (rgxC) of Aspergillus niger (strain ATCC MYA-4892 / CBS 513.88 / FGSC A1513).